A 633-amino-acid chain; its full sequence is UvrABC system protein C (633 aa).

The GIY-YIG domain maps to threonine 21–valine 100. Positions glutamine 214–tyrosine 249 constitute a UVR domain.

It belongs to the UvrC family. Interacts with UvrB in an incision complex.

It localises to the cytoplasm. In terms of biological role, the UvrABC repair system catalyzes the recognition and processing of DNA lesions. UvrC both incises the 5' and 3' sides of the lesion. The N-terminal half is responsible for the 3' incision and the C-terminal half is responsible for the 5' incision. The chain is UvrABC system protein C from Salinibacter ruber (strain DSM 13855 / M31).